The chain runs to 62 residues: Small polypeptide DEVIL 17 (62 aa).

A required for DVL/RTFL small polypeptide activity region spans residues 27 to 58 (RRNKGCLAMVKERRSRFYIARRCILMLLCWHK). Residues 39-56 (RRSRFYIARRCILMLLCW) form a helical membrane-spanning segment.

This sequence belongs to the DVL/RTFL small polypeptides family.

Its subcellular location is the cell membrane. Functionally, small polypeptide acting as a regulatory molecule which coordinates cellular responses required for differentiation, growth and development, probably by restricting polar cell proliferation in lateral organs and coordinating socket cell recruitment and differentiation at trichome sites. The chain is Small polypeptide DEVIL 17 from Arabidopsis thaliana (Mouse-ear cress).